The chain runs to 616 residues: 2-[(L-alanin-3-ylcarbamoyl)methyl]-3-(2-aminoethylcarbamoyl)-2-hydroxypropanoate synthase (616 aa).

The protein belongs to the IucA/IucC family. Forms a mixture of monomer and dimer in solution.

It carries out the reaction 2-[(2-aminoethylcarbamoyl)methyl]-2-hydroxybutanedioate + (S)-2,3-diaminopropanoate + ATP = 2-[(L-alanin-3-ylcarbamoyl)methyl]-3-(2-aminoethylcarbamoyl)-2-hydroxypropanoate + AMP + diphosphate. It participates in siderophore biosynthesis. Functionally, catalyzes the condensation of L-2,3-diaminopropionic acid (L-Dap) and citryl-diaminoethane to form L-2,3-diaminopropionyl-citryl-diaminoethane, the third step in staphyloferrin B biosynthesis. The sequence is that of 2-[(L-alanin-3-ylcarbamoyl)methyl]-3-(2-aminoethylcarbamoyl)-2-hydroxypropanoate synthase from Staphylococcus aureus (strain NCTC 8325 / PS 47).